A 536-amino-acid chain; its full sequence is ATP synthase subunit beta (536 aa).

A disordered region spans residues 1-57; sequence MVKAVSSSKGAAKVEQKKSAARSGVKKNASKSQASLQDTSSPLKTSSKNAHAKKDVQ. Residues 30–49 show a composition bias toward polar residues; sequence SKSQASLQDTSSPLKTSSKN. Residue 208 to 215 participates in ATP binding; the sequence is GGAGVGKT.

This sequence belongs to the ATPase alpha/beta chains family. In terms of assembly, F-type ATPases have 2 components, CF(1) - the catalytic core - and CF(0) - the membrane proton channel. CF(1) has five subunits: alpha(3), beta(3), gamma(1), delta(1), epsilon(1). CF(0) has three main subunits: a(1), b(2) and c(9-12). The alpha and beta chains form an alternating ring which encloses part of the gamma chain. CF(1) is attached to CF(0) by a central stalk formed by the gamma and epsilon chains, while a peripheral stalk is formed by the delta and b chains.

The protein localises to the cell inner membrane. The catalysed reaction is ATP + H2O + 4 H(+)(in) = ADP + phosphate + 5 H(+)(out). Its function is as follows. Produces ATP from ADP in the presence of a proton gradient across the membrane. The catalytic sites are hosted primarily by the beta subunits. This Bartonella quintana (strain Toulouse) (Rochalimaea quintana) protein is ATP synthase subunit beta.